A 220-amino-acid polypeptide reads, in one-letter code: Adenylate kinase (220 aa).

An ATP-binding site is contributed by 10–15 (GAGKGT). Positions 30 to 59 (STGDMLRAAVKAGSPLGVEAKGYMDAGKLV) are NMP. Residues threonine 31, arginine 36, 57–59 (KLV), 85–88 (GFPR), and glutamine 92 contribute to the AMP site. An LID region spans residues 122 to 159 (GRRTHAASGRTYHVKFNPPKVEGQDDVTGEPLIQRDDD). Residues arginine 123 and 132 to 133 (TY) each bind ATP. 2 residues coordinate AMP: arginine 156 and arginine 167. Residue glycine 206 participates in ATP binding.

The protein belongs to the adenylate kinase family. Monomer.

It localises to the cytoplasm. The catalysed reaction is AMP + ATP = 2 ADP. It participates in purine metabolism; AMP biosynthesis via salvage pathway; AMP from ADP: step 1/1. Catalyzes the reversible transfer of the terminal phosphate group between ATP and AMP. Plays an important role in cellular energy homeostasis and in adenine nucleotide metabolism. This is Adenylate kinase from Burkholderia vietnamiensis (strain G4 / LMG 22486) (Burkholderia cepacia (strain R1808)).